Consider the following 309-residue polypeptide: E3 ubiquitin-protein ligase SINAT5 (309 aa).

The RING-type zinc-finger motif lies at 46–82 (CPVCTNSMYPPIHQCHNGHTLCSTCKSRVHNRCPTCR). The tract at residues 96-289 (VAESLELPCK…KELKLRVTGR (194 aa)) is SBD. An SIAH-type zinc finger spans residues 99–159 (SLELPCKYYN…LVAHLRDDHK (61 aa)). Residues C104, C111, H123, C127, C134, C141, H153, and H158 each coordinate Zn(2+).

Belongs to the SINA (Seven in absentia) family. In terms of assembly, homodimer; homodimerization is essential for its function. Interacts with UBC28 and NAC021/NAC022. Interacts with SINAT6. Interacts with ATG6 and TRAF1A. Interacts with WAV3. Interacts with FREE1. As to expression, expressed at low level in the vascular tissue of mature roots. Expressed in lateral roots and in elongation zone of the main root upon stimulation by auxin. Colocalizes with NAC021/NAC022.

It localises to the nucleus. It is found in the cytoplasm. The enzyme catalyses S-ubiquitinyl-[E2 ubiquitin-conjugating enzyme]-L-cysteine + [acceptor protein]-L-lysine = [E2 ubiquitin-conjugating enzyme]-L-cysteine + N(6)-ubiquitinyl-[acceptor protein]-L-lysine.. Its pathway is protein modification; protein ubiquitination. E3 ubiquitin-protein ligase that mediates ubiquitination and subsequent proteasomal degradation of target proteins. E3 ubiquitin ligases accept ubiquitin from an E2 ubiquitin-conjugating enzyme in the form of a thioester and then directly transfers the ubiquitin to targeted substrates. Mediates the ubiquitination and proteasomal-dependent degradation of NAC021/NAC022, a transcription activator that functions downstream of the auxin signals, thereby acting as a down-regulator of auxin signals. Involved in the formation of lateral roots. Is antagonist to SINAT1, SINAT2, SINAT3 and SINAT4 by suppressing FREE1 ubiquitination and degradation mediated by SINAT1, SINAT2, SINAT3 and SINAT4, and promoting FREE1 accumulation. The chain is E3 ubiquitin-protein ligase SINAT5 from Arabidopsis thaliana (Mouse-ear cress).